A 367-amino-acid polypeptide reads, in one-letter code: Cellular tumor antigen p53 (367 aa).

The tract at residues 1–30 is transcription activation (acidic); sequence MAEEMEPLLEPTEVFMDLWSMLPYSMQQLP. Residues 30 to 84 form a disordered region; sequence PLPEDHSNWQELSPLEPSDPPPPPPPPPLPLAAAAPPPLNPPTPPRAAPSPVVPS. The segment covering 46-81 has biased composition (pro residues); it reads PSDPPPPPPPPPLPLAAAAPPPLNPPTPPRAAPSPV. Residues 87–278 mediate DNA binding; the sequence is DYGGDFDFRV…KIEEENFRKR (192 aa). Residues cysteine 161, histidine 164, cysteine 224, and cysteine 228 each coordinate Zn(2+). An interaction with DNA region spans residues 259-266; sequence RVCACPGR. 2 disordered regions span residues 275–303 and 333–367; these read FRKR…KKRV and LAEG…KGSD. The short motif at 286–302 is the Bipartite nuclear localization signal element; that stretch reads KRAMSPPTEAPEPPKKR. The interval 308 to 339 is oligomerization; sequence NEIFYLQVRGRRRYEMLKEINEALQLAEGGSA. Positions 322-333 match the Nuclear export signal motif; that stretch reads EMLKEINEALQL. The tract at residues 347–364 is basic (repression of DNA-binding); it reads RVKVEGPQPSCGKKLLQK.

The protein belongs to the p53 family. Binds DNA as a homotetramer. Requires Zn(2+) as cofactor.

The protein localises to the cytoplasm. The protein resides in the nucleus. Functionally, multifunctional transcription factor that induces cell cycle arrest, DNA repair or apoptosis upon binding to its target DNA sequence. Acts as a tumor suppressor in many tumor types; induces growth arrest or apoptosis depending on the physiological circumstances and cell type. Negatively regulates cell division by controlling expression of a set of genes required for this process. One of the activated genes is an inhibitor of cyclin-dependent kinases. Apoptosis induction seems to be mediated either by stimulation of BAX and FAS antigen expression, or by repression of Bcl-2 expression. The polypeptide is Cellular tumor antigen p53 (TP53) (Gallus gallus (Chicken)).